The chain runs to 454 residues: L-serine dehydratase TdcG (454 aa).

Belongs to the iron-sulfur dependent L-serine dehydratase family. It depends on [4Fe-4S] cluster as a cofactor.

The enzyme catalyses L-serine = pyruvate + NH4(+). The protein operates within amino-acid degradation; L-threonine degradation via propanoate pathway. The chain is L-serine dehydratase TdcG (tdcG) from Escherichia coli (strain K12).